The following is a 397-amino-acid chain: MTPAIYLVKGRDKSLRRKHPWVFSRGISKVEGTPKLGETVDVYSFEGKWLAKAAYSPHSQITARVWSFEQEPIDRDFFIKRIEQAQLLRNDIIERDGLTGYRLIAAESDGLPGITIDKYQDYLVCQLLSAGAEYQKQTLVEALLHCFPECHIYERSDVAVRKKEGLDERVGVLHGELPPKSVVIEENGVKISVDIVGGHKTGFYLDQRDSRFQSMKYVKEKEVLNCFSYTGGFGLYALKGGAKRVINADVSQPALDTAKFNAELNGFDISKKRAVFLNADVFKLLREYRDQGTRFDVVVMDPPKFAESKAQLDGACRGYKDINMLAMQILNPGGTLLTYSCSGLMDQVLFQKIIADAALDAGRDVKFVERFEQAADHPTDTAYPEGFYLKGFACKVL.

Residues T2–F78 form the PUA domain.

This sequence belongs to the methyltransferase superfamily. RlmI family.

The protein localises to the cytoplasm. The catalysed reaction is cytidine(1962) in 23S rRNA + S-adenosyl-L-methionine = 5-methylcytidine(1962) in 23S rRNA + S-adenosyl-L-homocysteine + H(+). Functionally, specifically methylates the cytosine at position 1962 (m5C1962) of 23S rRNA. This chain is Ribosomal RNA large subunit methyltransferase I, found in Vibrio cholerae serotype O1 (strain ATCC 39541 / Classical Ogawa 395 / O395).